The chain runs to 727 residues: Catalase-peroxidase (727 aa).

The tract at residues 1–26 (MSDEKKCPVTGRTSSQVAGSGTSNKD) is disordered. Over residues 11–26 (GRTSSQVAGSGTSNKD) the composition is skewed to polar residues. Positions 96-219 (WHSAGTYRIG…LAAVQMGLIY (124 aa)) form a cross-link, tryptophyl-tyrosyl-methioninium (Trp-Tyr) (with M-245). The active-site Proton acceptor is His-97. Positions 219 to 245 (YVNPEGPNGDPNAVASGKDVRETFARM) form a cross-link, tryptophyl-tyrosyl-methioninium (Tyr-Met) (with W-96). His-260 lines the heme b pocket. Over residues 346 to 362 (SDPEAKKAVPDAHDPSK) the composition is skewed to basic and acidic residues. Residues 346 to 365 (SDPEAKKAVPDAHDPSKTHP) are disordered.

It belongs to the peroxidase family. Peroxidase/catalase subfamily. In terms of assembly, homodimer or homotetramer. Requires heme b as cofactor. In terms of processing, formation of the three residue Trp-Tyr-Met cross-link is important for the catalase, but not the peroxidase activity of the enzyme.

The enzyme catalyses H2O2 + AH2 = A + 2 H2O. It carries out the reaction 2 H2O2 = O2 + 2 H2O. In terms of biological role, bifunctional enzyme with both catalase and broad-spectrum peroxidase activity. The polypeptide is Catalase-peroxidase (Maridesulfovibrio salexigens (strain ATCC 14822 / DSM 2638 / NCIMB 8403 / VKM B-1763) (Desulfovibrio salexigens)).